A 617-amino-acid polypeptide reads, in one-letter code: Sodium-dependent noradrenaline transporter (617 aa).

A disordered region spans residues methionine 1–glutamine 23. Over methionine 1–lysine 62 the chain is Cytoplasmic. The span at proline 8–alanine 17 shows a compositional bias: polar residues. Residues isoleucine 63–lysine 88 traverse the membrane as a helical segment. Na(+)-binding residues include glycine 71, alanine 73, and valine 74. Aspartate 75 is a binding site for (R)-noradrenaline. Aspartate 75 contributes to the dopamine binding site. Asparagine 78 is a binding site for Na(+). Residues tyrosine 87 and lysine 88 each coordinate (R)-noradrenaline. Residues asparagine 89 to glycine 92 lie on the Extracellular side of the membrane. The helical transmembrane segment at alanine 93–leucine 116 threads the bilayer. At glycine 117–lysine 135 the chain is on the cytoplasmic side. A helical membrane pass occupies residues glycine 136–serine 166. (R)-noradrenaline is bound by residues alanine 145 and glycine 149. Alanine 145 contributes to the dopamine binding site. At phenylalanine 167–proline 233 the chain is on the extracellular side. Cysteines 176 and 185 form a disulfide. 3 N-linked (GlcNAc...) asparagine glycosylation sites follow: asparagine 184, asparagine 192, and asparagine 198. The chain crosses the membrane as a helical span at residues glutamine 234–lysine 254. At glycine 255 to lysine 257 the chain is on the cytoplasmic side. The chain crosses the membrane as a helical span at residues threonine 258–valine 282. Topologically, residues threonine 283–threonine 306 are extracellular. Residues valine 307–tyrosine 332 traverse the membrane as a helical segment. Phenylalanine 317 provides a ligand contact to (R)-noradrenaline. Dopamine is bound at residue phenylalanine 317. Residue serine 318 participates in Na(+) binding. The Cytoplasmic portion of the chain corresponds to asparagine 333–asparagine 338. Residues cysteine 339–phenylalanine 362 traverse the membrane as a helical segment. Position 350 (asparagine 350) interacts with Na(+). Residues serine 363 to threonine 402 are Extracellular-facing. Residue glutamate 382 participates in (R)-noradrenaline binding. Glutamate 382 provides a ligand contact to dopamine. The chain crosses the membrane as a helical span at residues phenylalanine 403–isoleucine 428. 2 residues coordinate Na(+): aspartate 418 and serine 419. Over threonine 429–lysine 443 the chain is Cytoplasmic. A helical transmembrane segment spans residues leucine 444–glycine 464. Residue glycine 465 is a topological domain, extracellular. Residues isoleucine 466–valine 492 form a helical membrane-spanning segment. Topologically, residues serine 493–lysine 522 are cytoplasmic. A helical transmembrane segment spans residues phenylalanine 523 to tyrosine 545. Residues aspartate 546–tyrosine 548 lie on the Extracellular side of the membrane. The helical transmembrane segment at isoleucine 549–valine 569 threads the bilayer. Over proline 570–isoleucine 617 the chain is Cytoplasmic.

The protein belongs to the sodium:neurotransmitter symporter (SNF) (TC 2.A.22) family. SLC6A2 subfamily. In terms of assembly, monomer. Can form homodimers in the cell membrane; homodimerization is mostly mediated by cholesterol and lipids, and regulates neurotransmitter transport activity. Interacts with PRKCABP. In terms of processing, palmitoylated; palmitoylation regulates protein levels and neurotransmitter transport.

It is found in the cell membrane. The protein resides in the cell projection. It localises to the axon. The protein localises to the synapse. Its subcellular location is the synaptosome. It catalyses the reaction (R)-noradrenaline(out) + chloride(out) + Na(+)(out) = (R)-noradrenaline(in) + chloride(in) + Na(+)(in). The enzyme catalyses dopamine(out) + chloride(out) + Na(+)(out) = dopamine(in) + chloride(in) + Na(+)(in). The catalysed reaction is dopamine(out) + chloride(out) + 2 Na(+)(out) = dopamine(in) + chloride(in) + 2 Na(+)(in). With respect to regulation, inhibited by mazindol, desipramine, nomifensine and nortriptyline. Functionally, mediates sodium- and chloride-dependent transport of norepinephrine (also known as noradrenaline), the primary signaling neurotransmitter in the autonomic sympathetic nervous system. Is responsible for norepinephrine re-uptake and clearance from the synaptic cleft, thus playing a crucial role in norepinephrine inactivation and homeostasis. Can also mediate sodium- and chloride-dependent transport of dopamine. The protein is Sodium-dependent noradrenaline transporter of Homo sapiens (Human).